The sequence spans 246 residues: tRNA pseudouridine synthase A (246 aa).

The active-site Nucleophile is D52. Y111 contacts substrate.

Belongs to the tRNA pseudouridine synthase TruA family. Homodimer.

It carries out the reaction uridine(38/39/40) in tRNA = pseudouridine(38/39/40) in tRNA. In terms of biological role, formation of pseudouridine at positions 38, 39 and 40 in the anticodon stem and loop of transfer RNAs. The polypeptide is tRNA pseudouridine synthase A (Borreliella burgdorferi (strain ATCC 35210 / DSM 4680 / CIP 102532 / B31) (Borrelia burgdorferi)).